Reading from the N-terminus, the 108-residue chain is Phosphoribosyl-ATP pyrophosphatase (108 aa).

This sequence belongs to the PRA-PH family.

It localises to the cytoplasm. The enzyme catalyses 1-(5-phospho-beta-D-ribosyl)-ATP + H2O = 1-(5-phospho-beta-D-ribosyl)-5'-AMP + diphosphate + H(+). The protein operates within amino-acid biosynthesis; L-histidine biosynthesis; L-histidine from 5-phospho-alpha-D-ribose 1-diphosphate: step 2/9. The sequence is that of Phosphoribosyl-ATP pyrophosphatase from Chromobacterium violaceum (strain ATCC 12472 / DSM 30191 / JCM 1249 / CCUG 213 / NBRC 12614 / NCIMB 9131 / NCTC 9757 / MK).